The primary structure comprises 382 residues: Solvent efflux pump periplasmic linker SrpA (382 aa).

Positions 1–23 are cleaved as a signal peptide; sequence MRQIRSPRALRVIPLTALMLISG. Residue Cys24 is the site of N-palmitoyl cysteine attachment. Cys24 carries the S-diacylglycerol cysteine lipid modification. Residues 98 to 127 are a coiled coil; it reads RTYEAQLRRAEANRTSAQNLARRYETLLKT.

The protein belongs to the membrane fusion protein (MFP) (TC 8.A.1) family.

Its subcellular location is the cell inner membrane. In terms of biological role, the periplasmic linker protein component of an organic solvent efflux pump. Involved in export of a number of low log POW compounds including hexane (log POW 3.5), toluene (log POW 2.5) and dimethylphthalate (log POW 2.3). The solvent resistance phenotype has been postulated to depend on the operon expression level. The polypeptide is Solvent efflux pump periplasmic linker SrpA (srpA) (Pseudomonas putida (Arthrobacter siderocapsulatus)).